The sequence spans 408 residues: Tyrosine--tRNA ligase (408 aa).

The 'HIGH' region motif lies at 50–59 (PTGKDLTLGH). The 'KMSKS' region signature appears at 234–238 (KMSKS). Lysine 237 contributes to the ATP binding site. The region spanning 346 to 407 (MQAARVLFTA…GKRKYGRVVL (62 aa)) is the S4 RNA-binding domain.

It belongs to the class-I aminoacyl-tRNA synthetase family. TyrS type 2 subfamily. As to quaternary structure, homodimer.

The protein localises to the cytoplasm. It catalyses the reaction tRNA(Tyr) + L-tyrosine + ATP = L-tyrosyl-tRNA(Tyr) + AMP + diphosphate + H(+). Its function is as follows. Catalyzes the attachment of tyrosine to tRNA(Tyr) in a two-step reaction: tyrosine is first activated by ATP to form Tyr-AMP and then transferred to the acceptor end of tRNA(Tyr). The chain is Tyrosine--tRNA ligase from Symbiobacterium thermophilum (strain DSM 24528 / JCM 14929 / IAM 14863 / T).